Consider the following 538-residue polypeptide: Syncytin-2 (538 aa).

An N-terminal signal peptide occupies residues 1–15 (MGLLLLVLILTPSLA). Over 16–478 (AYRHPDFPLL…GWLNWEGTWK (463 aa)) the chain is Extracellular. The CXXC motif lies at 43 to 46 (CWLC). Disulfide bonds link Cys43/Cys46, Cys43/Cys439, and Cys431/Cys438. Residues Asn133, Asn146, Asn177, Asn220, Asn241, Asn247, Asn312, and Asn332 are each glycosylated (N-linked (GlcNAc...) asparagine). Residues 354–374 (FIPLLAGLGILAGTGTGIAGI) are fusion peptide. Residues 414–430 (LQNRRGLDMLTAAQGGI) carry the CKS-17 motif. The short motif at 431-439 (CLALDEKCC) is the CX6CC element. The N-linked (GlcNAc...) asparagine glycan is linked to Asn443. A helical membrane pass occupies residues 479-499 (WFSWVLPLTGPLVSLLLLLLF). Over 500–538 (GPCLLNLITQFVSSRLQAIKLQTNLSAGRHPRNIQESPF) the chain is Cytoplasmic.

This sequence belongs to the gamma type-C retroviral envelope protein family. HERV class-I FRD env subfamily. The surface and transmembrane proteins form a heterodimer. They are attached by non-covalent interactions or by a labile interchain disulfide bond. Interacts with MFSD2A. Specific enzymatic cleavages in vivo yield the mature SU and TM proteins. Post-translationally, the CXXC motif is highly conserved across a broad range of retroviral envelope proteins. It is thought to participate in the formation of a labile disulfide bond possibly with the CX6CC motif present in the transmembrane protein. Isomerization of the intersubunit disulfide bond to an SU intrachain disulfide bond is thought to occur upon receptor recognition in order to allow membrane fusion. Expressed at higher level in placenta. Expressed at lower level in adrenal, bone marrow, brain, breast, colon, kidney, lung, ovary, peripheral blood lymphocytes, prostate, skin, spleen, testis, thymus, thyroid, trachea.

It is found in the virion. Its subcellular location is the cell membrane. In terms of biological role, this endogenous retroviral envelope protein has retained its original fusogenic properties and participates in trophoblast fusion and the formation of a syncytium during placenta morphogenesis. The interaction with MFSD2A is apparently important for this process. Functionally, endogenous envelope proteins may have kept, lost or modified their original function during evolution but this one can still make pseudotypes with MLV, HIV-1 or SIV-1 virions and confer infectivity. Retroviral envelope proteins mediate receptor recognition and membrane fusion during early infection. The surface protein mediates receptor recognition, while the transmembrane protein anchors the envelope heterodimer to the viral membrane through one transmembrane domain. The other hydrophobic domain, called fusion peptide, mediates fusion of the viral membrane with the target cell membrane. This chain is Syncytin-2 (ERVFRD-1), found in Homo sapiens (Human).